A 132-amino-acid chain; its full sequence is Fatty acid-binding protein 12 (132 aa).

Residues arginine 107 and 127 to 129 (RTY) each bind a fatty acid.

This sequence belongs to the calycin superfamily. Fatty-acid binding protein (FABP) family. As to expression, highly expressed in adult retina and testis with lower levels in cerebral cortex, kidney and epididymis. In the retina, strongly expressed in the ganglion cell layer and throughout the inner nuclear layer in amacrine and bipolar cells. Not expressed in the outer nuclear layer. In the testis, detected in the seminiferous tubules.

May play a role in lipid transport. The polypeptide is Fatty acid-binding protein 12 (Rattus norvegicus (Rat)).